The following is a 406-amino-acid chain: Imidazolonepropionase (406 aa).

H72 and H74 together coordinate Fe(3+). Zn(2+) is bound by residues H72 and H74. 4-imidazolone-5-propanoate-binding residues include R81, Y144, and H177. Y144 contacts N-formimidoyl-L-glutamate. Fe(3+) is bound at residue H242. H242 contributes to the Zn(2+) binding site. Q245 serves as a coordination point for 4-imidazolone-5-propanoate. D317 contacts Fe(3+). Residue D317 participates in Zn(2+) binding. N-formimidoyl-L-glutamate-binding residues include N319 and G321. T322 contacts 4-imidazolone-5-propanoate.

It belongs to the metallo-dependent hydrolases superfamily. HutI family. Requires Zn(2+) as cofactor. It depends on Fe(3+) as a cofactor.

Its subcellular location is the cytoplasm. The enzyme catalyses 4-imidazolone-5-propanoate + H2O = N-formimidoyl-L-glutamate. It functions in the pathway amino-acid degradation; L-histidine degradation into L-glutamate; N-formimidoyl-L-glutamate from L-histidine: step 3/3. In terms of biological role, catalyzes the hydrolytic cleavage of the carbon-nitrogen bond in imidazolone-5-propanoate to yield N-formimidoyl-L-glutamate. It is the third step in the universal histidine degradation pathway. The sequence is that of Imidazolonepropionase from Yersinia enterocolitica serotype O:8 / biotype 1B (strain NCTC 13174 / 8081).